A 494-amino-acid chain; its full sequence is Cytochrome P450 2A11 (494 aa).

Lys379 carries the N6-acetyllysine modification. Cys439 contributes to the heme binding site.

This sequence belongs to the cytochrome P450 family. Requires heme as cofactor. As to expression, expressed in liver and lung as well as in nasal tissues.

It is found in the endoplasmic reticulum membrane. The protein localises to the microsome membrane. The catalysed reaction is an organic molecule + reduced [NADPH--hemoprotein reductase] + O2 = an alcohol + oxidized [NADPH--hemoprotein reductase] + H2O + H(+). Its function is as follows. Catalyzes the oxygenation of a variety of substrates, including ethanol and procarcinogens such as N-nitrosodiethylamine and phenacetin. Has no or little activity as a coumarin 7-hydroxylase and in the formation of androstenedione from testosterone. The polypeptide is Cytochrome P450 2A11 (CYP2A11) (Oryctolagus cuniculus (Rabbit)).